A 521-amino-acid polypeptide reads, in one-letter code: Glucose-6-phosphate isomerase (521 aa).

Glutamate 351 functions as the Proton donor in the catalytic mechanism. Residues histidine 382 and lysine 491 contribute to the active site.

It belongs to the GPI family.

The protein localises to the cytoplasm. The catalysed reaction is alpha-D-glucose 6-phosphate = beta-D-fructose 6-phosphate. Its pathway is carbohydrate biosynthesis; gluconeogenesis. It participates in carbohydrate degradation; glycolysis; D-glyceraldehyde 3-phosphate and glycerone phosphate from D-glucose: step 2/4. Functionally, catalyzes the reversible isomerization of glucose-6-phosphate to fructose-6-phosphate. The sequence is that of Glucose-6-phosphate isomerase from Polaromonas naphthalenivorans (strain CJ2).